The chain runs to 647 residues: MSVSNPEFSESSILRPVEISRQTHPHKKGASIALMFAAIGIVFGDIGTSPLYALKECFSPDHGIPFSADAVYGVISMVFWAFAIVVSLKYVLFVMRANNHGEGGILALMALALRTAPNGSKRSLLIIMAGVFGACMFYGDAIITPAISVLSAVEGLEVISSDLTRFVLPITVLILVILFFIQKTGTEVVGKLFGPIMMVWFITIGLMGLHQVIQNPAIFAAVNPMFAIRFLIEHSLQGFIVLGAVFLVLTGAEALYADMGHFGIRPIRMGWFFIVMPCLLLNYFGQGAMFLANPETISNPFFLMVPEVFVFPLVILATAATVIASQAVISGAFSMTSQAILLGFVPRMKVRHTSDREIGQIYMPFVNWTLLFLVIVVVLAFKKSENLAAAYGIAVTTTMIVTTLLAAIVMRVVWRWNTILVTLVIGAFLTVDLAFLTANLLKIMEGGWFPLLLGAICFLFLMTWYQGRKLLRQNAVNNGIELKGFIDALMQHPPHRVEGTALFLTAHVDYVPVSFLHNLKHNHVLHERVFFLKVSIWDVPYVKDEERITLRDMGNGIYVVRAVYGFNETPDMGQIIELIEKSADLKFDMMNTSFFLSRDTIVSTEIPGMAMWRERLFCWMYQNAGRQSDFFKIPANRLVELGAKVEI.

13 consecutive transmembrane segments (helical) span residues 32–52 (IALM…SPLY), 74–94 (VISM…VLFV), 124–144 (LLII…AIIT), 166–186 (FVLP…KTGT), 193–213 (FGPI…HQVI), 230–250 (FLIE…LVLT), 271–291 (WFFI…AMFL), 300–320 (PFFL…ATAA), 322–342 (VIAS…AILL), 361–381 (IYMP…VLAF), 390–410 (AYGI…AIVM), 418–438 (TILV…FLTA), and 443–463 (IMEG…FLMT).

Belongs to the HAK/KUP transporter (TC 2.A.72) family.

It localises to the cell inner membrane. It catalyses the reaction K(+)(in) + H(+)(in) = K(+)(out) + H(+)(out). Its function is as follows. Transport of potassium into the cell. Likely operates as a K(+):H(+) symporter. This chain is Probable potassium transport system protein Kup, found in Polynucleobacter asymbioticus (strain DSM 18221 / CIP 109841 / QLW-P1DMWA-1) (Polynucleobacter necessarius subsp. asymbioticus).